A 185-amino-acid polypeptide reads, in one-letter code: Photosystem I assembly protein Ycf4 (185 aa).

2 helical membrane passes run 24–44 (YIIG…SISS) and 66–86 (IIMG…WYLV).

This sequence belongs to the Ycf4 family.

The protein resides in the cellular thylakoid membrane. Its function is as follows. Seems to be required for the assembly of the photosystem I complex. The chain is Photosystem I assembly protein Ycf4 from Prochlorococcus marinus (strain MIT 9301).